A 90-amino-acid polypeptide reads, in one-letter code: MSRTIFCTFLNKEADGLDFQLYPGELGKRIFNEISKEAWGQWMAKQTMLINEKKLNTMNPDDRKLLEQEMVRFLFEGHDVHIDGYTPPEK.

This sequence belongs to the Fe(2+)-trafficking protein family. As to quaternary structure, monomer.

Its function is as follows. Could be a mediator in iron transactions between iron acquisition and iron-requiring processes, such as synthesis and/or repair of Fe-S clusters in biosynthetic enzymes. The sequence is that of Probable Fe(2+)-trafficking protein from Proteus mirabilis (strain HI4320).